Here is a 347-residue protein sequence, read N- to C-terminus: Probable 3-hydroxyisobutyrate dehydrogenase, mitochondrial (347 aa).

The N-terminal 34 residues, M1–S34, are a transit peptide targeting the mitochondrion. NAD(+) contacts are provided by residues Q38–D67, L101–P102, and T134. Residue K219 is part of the active site. Position 294 (K294) interacts with NAD(+).

This sequence belongs to the HIBADH-related family. 3-hydroxyisobutyrate dehydrogenase subfamily.

It is found in the mitochondrion. The catalysed reaction is 3-hydroxy-2-methylpropanoate + NAD(+) = 2-methyl-3-oxopropanoate + NADH + H(+). The protein operates within amino-acid degradation; L-valine degradation. The sequence is that of Probable 3-hydroxyisobutyrate dehydrogenase, mitochondrial from Arabidopsis thaliana (Mouse-ear cress).